Here is a 132-residue protein sequence, read N- to C-terminus: UPF0102 protein Ajs_0414 (132 aa).

The disordered stretch occupies residues 1–23; sequence MGFLGKKVNGSAPARTTRAAGQA.

Belongs to the UPF0102 family.

This Acidovorax sp. (strain JS42) protein is UPF0102 protein Ajs_0414.